The sequence spans 637 residues: Poly(A) polymerase beta (637 aa).

Low complexity predominate over residues 1-10 (MMPFPVTTQG). The tract at residues 1–23 (MMPFPVTTQGPPQPAPPPNRYGV) is disordered. Residues 101–103 (FGS), Thr-110, 114–116 (DID), Asp-168, Lys-229, Tyr-238, and 247–248 (GV) contribute to the ATP site. Positions 114, 116, and 168 each coordinate Mg(2+). Positions 535–555 (SVPSSTSTMKTGPLISSSQGR) are disordered.

This sequence belongs to the poly(A) polymerase family. In terms of assembly, interacts with GSG1. Mg(2+) is required as a cofactor. The cofactor is Mn(2+). As to expression, testis specific.

The protein resides in the nucleus. The catalysed reaction is RNA(n) + ATP = RNA(n)-3'-adenine ribonucleotide + diphosphate. This chain is Poly(A) polymerase beta, found in Homo sapiens (Human).